Here is a 196-residue protein sequence, read N- to C-terminus: Phosphate-specific transport system accessory protein PhoU homolog (196 aa).

It belongs to the PhoU family. In terms of assembly, homodimer.

It localises to the cytoplasm. Functionally, plays a role in the regulation of phosphate uptake. The protein is Phosphate-specific transport system accessory protein PhoU homolog of Archaeoglobus fulgidus (strain ATCC 49558 / DSM 4304 / JCM 9628 / NBRC 100126 / VC-16).